The following is a 323-amino-acid chain: o-succinylbenzoate synthase (323 aa).

Residue lysine 134 is the Proton donor of the active site. 3 residues coordinate Mg(2+): aspartate 162, glutamate 191, and aspartate 214. Lysine 236 (proton acceptor) is an active-site residue.

The protein belongs to the mandelate racemase/muconate lactonizing enzyme family. MenC type 1 subfamily. A divalent metal cation serves as cofactor.

The catalysed reaction is (1R,6R)-6-hydroxy-2-succinyl-cyclohexa-2,4-diene-1-carboxylate = 2-succinylbenzoate + H2O. Its pathway is quinol/quinone metabolism; 1,4-dihydroxy-2-naphthoate biosynthesis; 1,4-dihydroxy-2-naphthoate from chorismate: step 4/7. It participates in quinol/quinone metabolism; menaquinone biosynthesis. Functionally, converts 2-succinyl-6-hydroxy-2,4-cyclohexadiene-1-carboxylate (SHCHC) to 2-succinylbenzoate (OSB). In Photorhabdus laumondii subsp. laumondii (strain DSM 15139 / CIP 105565 / TT01) (Photorhabdus luminescens subsp. laumondii), this protein is o-succinylbenzoate synthase.